A 436-amino-acid chain; its full sequence is 3-oxo-tetronate kinase (436 aa).

ATP-binding positions include serine 272, 372–375 (GGET), and glycine 415.

This sequence belongs to the four-carbon acid sugar kinase family.

The enzyme catalyses 3-dehydro-L-erythronate + ATP = 3-dehydro-4-O-phospho-L-erythronate + ADP + H(+). It carries out the reaction 3-dehydro-D-erythronate + ATP = 3-dehydro-4-O-phospho-D-erythronate + ADP + H(+). Its function is as follows. Catalyzes the ATP-dependent phosphorylation of 3-oxo-tetronate to 3-oxo-tetronate 4-phosphate. In Brucella melitensis biotype 1 (strain ATCC 23456 / CCUG 17765 / NCTC 10094 / 16M), this protein is 3-oxo-tetronate kinase.